Consider the following 267-residue polypeptide: Digeranylgeranylglyceryl phosphate synthase (267 aa).

7 helical membrane-spanning segments follow: residues alanine 10 to leucine 30, leucine 33 to isoleucine 53, alanine 80 to asparagine 100, leucine 104 to leucine 121, threonine 139 to leucine 159, valine 198 to isoleucine 218, and glutamine 247 to isoleucine 267.

The protein belongs to the UbiA prenyltransferase family. DGGGP synthase subfamily. Mg(2+) is required as a cofactor.

The protein localises to the cell membrane. The enzyme catalyses sn-3-O-(geranylgeranyl)glycerol 1-phosphate + (2E,6E,10E)-geranylgeranyl diphosphate = 2,3-bis-O-(geranylgeranyl)-sn-glycerol 1-phosphate + diphosphate. It participates in membrane lipid metabolism; glycerophospholipid metabolism. Its function is as follows. Prenyltransferase that catalyzes the transfer of the geranylgeranyl moiety of geranylgeranyl diphosphate (GGPP) to the C2 hydroxyl of (S)-3-O-geranylgeranylglyceryl phosphate (GGGP). This reaction is the second ether-bond-formation step in the biosynthesis of archaeal membrane lipids. This Methanothrix thermoacetophila (strain DSM 6194 / JCM 14653 / NBRC 101360 / PT) (Methanosaeta thermophila) protein is Digeranylgeranylglyceryl phosphate synthase.